A 495-amino-acid polypeptide reads, in one-letter code: Probable leucine aminopeptidase 2 (495 aa).

The N-terminal stretch at Met-1 to Gly-21 is a signal peptide. The PA domain maps to Met-130 to Thr-216. Residues Asn-142 and Asn-235 are each glycosylated (N-linked (GlcNAc...) asparagine). Residues His-259 and Asp-271 each contribute to the Zn(2+) site. Residue Asn-272 is glycosylated (N-linked (GlcNAc...) asparagine). Catalysis depends on Glu-303, which acts as the Proton acceptor. Positions 304 and 332 each coordinate Zn(2+). N-linked (GlcNAc...) asparagine glycosylation is present at Asn-352. Residue His-430 participates in Zn(2+) binding.

The protein belongs to the peptidase M28 family. M28A subfamily. In terms of assembly, monomer. The cofactor is Zn(2+).

Its subcellular location is the secreted. Functionally, extracellular aminopeptidase that releases a wide variety of amino acids from natural peptides and contributes to pathogenicity. The protein is Probable leucine aminopeptidase 2 (LAP2) of Arthroderma benhamiae (strain ATCC MYA-4681 / CBS 112371) (Trichophyton mentagrophytes).